We begin with the raw amino-acid sequence, 170 residues long: Co-chaperone protein HscB homolog (170 aa).

The region spanning 5 to 79 (DHFSLFGLPA…RARYLCEQAG (75 aa)) is the J domain.

The protein belongs to the HscB family. Interacts with HscA and stimulates its ATPase activity.

Its function is as follows. Co-chaperone involved in the maturation of iron-sulfur cluster-containing proteins. Seems to help targeting proteins to be folded toward HscA. The polypeptide is Co-chaperone protein HscB homolog (Bordetella parapertussis (strain 12822 / ATCC BAA-587 / NCTC 13253)).